Consider the following 157-residue polypeptide: Cyclic pyranopterin monophosphate synthase (157 aa).

Residues 74 to 76 (MCH) and 112 to 113 (ME) contribute to the substrate site. The active site involves D127.

This sequence belongs to the MoaC family. As to quaternary structure, homohexamer; trimer of dimers.

It carries out the reaction (8S)-3',8-cyclo-7,8-dihydroguanosine 5'-triphosphate = cyclic pyranopterin phosphate + diphosphate. The protein operates within cofactor biosynthesis; molybdopterin biosynthesis. Its function is as follows. Catalyzes the conversion of (8S)-3',8-cyclo-7,8-dihydroguanosine 5'-triphosphate to cyclic pyranopterin monophosphate (cPMP). The sequence is that of Cyclic pyranopterin monophosphate synthase from Syntrophomonas wolfei subsp. wolfei (strain DSM 2245B / Goettingen).